A 175-amino-acid polypeptide reads, in one-letter code: ATP-dependent protease subunit HslV (175 aa).

Thr-2 is a catalytic residue. Na(+) contacts are provided by Ala-156, Cys-159, and Thr-162.

Belongs to the peptidase T1B family. HslV subfamily. In terms of assembly, a double ring-shaped homohexamer of HslV is capped on each side by a ring-shaped HslU homohexamer. The assembly of the HslU/HslV complex is dependent on binding of ATP.

It localises to the cytoplasm. It catalyses the reaction ATP-dependent cleavage of peptide bonds with broad specificity.. Allosterically activated by HslU binding. Functionally, protease subunit of a proteasome-like degradation complex believed to be a general protein degrading machinery. The chain is ATP-dependent protease subunit HslV from Rhizobium etli (strain ATCC 51251 / DSM 11541 / JCM 21823 / NBRC 15573 / CFN 42).